The chain runs to 609 residues: Dihydroxy-acid dehydratase (609 aa).

Asp-81 contacts Mg(2+). Residue Cys-122 coordinates [2Fe-2S] cluster. Mg(2+) is bound by residues Asp-123 and Lys-124. The residue at position 124 (Lys-124) is an N6-carboxylysine. Residue Cys-195 participates in [2Fe-2S] cluster binding. A Mg(2+)-binding site is contributed by Glu-491. Ser-517 (proton acceptor) is an active-site residue.

The protein belongs to the IlvD/Edd family. As to quaternary structure, homodimer. It depends on [2Fe-2S] cluster as a cofactor. Mg(2+) is required as a cofactor.

The enzyme catalyses (2R)-2,3-dihydroxy-3-methylbutanoate = 3-methyl-2-oxobutanoate + H2O. It carries out the reaction (2R,3R)-2,3-dihydroxy-3-methylpentanoate = (S)-3-methyl-2-oxopentanoate + H2O. The protein operates within amino-acid biosynthesis; L-isoleucine biosynthesis; L-isoleucine from 2-oxobutanoate: step 3/4. It functions in the pathway amino-acid biosynthesis; L-valine biosynthesis; L-valine from pyruvate: step 3/4. In terms of biological role, functions in the biosynthesis of branched-chain amino acids. Catalyzes the dehydration of (2R,3R)-2,3-dihydroxy-3-methylpentanoate (2,3-dihydroxy-3-methylvalerate) into 2-oxo-3-methylpentanoate (2-oxo-3-methylvalerate) and of (2R)-2,3-dihydroxy-3-methylbutanoate (2,3-dihydroxyisovalerate) into 2-oxo-3-methylbutanoate (2-oxoisovalerate), the penultimate precursor to L-isoleucine and L-valine, respectively. The chain is Dihydroxy-acid dehydratase from Acinetobacter baumannii (strain ACICU).